Consider the following 307-residue polypeptide: G-protein coupled receptor 35 (307 aa).

Residues 1-18 are Extracellular-facing; sequence MNSTTCNSTLTWPASVNN. 2 N-linked (GlcNAc...) asparagine glycosylation sites follow: Asn2 and Asn7. Residues 19–39 traverse the membrane as a helical segment; that stretch reads FFIIYSALLLVLGLLLNSVAL. Topologically, residues 40 to 53 are cytoplasmic; the sequence is WVFCYRMHQWTETR. Residues 54-74 traverse the membrane as a helical segment; it reads IYMTNLAVADLCLLCSLPFVL. Over 75-88 the chain is Extracellular; sequence YSLKYSSSDTPVCQ. Cys87 and Cys160 are oxidised to a cystine. The chain crosses the membrane as a helical span at residues 89-110; that stretch reads LSQGIYLANRYMSISLVTAIAV. The Cytoplasmic portion of the chain corresponds to 111–129; it reads DRYVAVRHPLRARELRSPR. A helical membrane pass occupies residues 130 to 150; that stretch reads QAAAVCVALWVIVVTSLVVRW. Residues 151–176 lie on the Extracellular side of the membrane; it reads RLGMQEGGFCFSSQTRRNFSTTAFSL. A helical membrane pass occupies residues 177–197; sequence LGFYLPLAIVVFCSLQVVTVL. Residues 198 to 217 are Cytoplasmic-facing; sequence SRRPAADVGQAEATQKATHM. Residues 218–238 traverse the membrane as a helical segment; the sequence is VWANLAVFVICFLPLHVVLTV. At 239-257 the chain is on the extracellular side; it reads QVSLNLNTCAARDTFSRAL. A helical transmembrane segment spans residues 258–278; it reads SITGKLSDTNCCLDAICYYYM. At 279–307 the chain is on the cytoplasmic side; that stretch reads AREFQEASKPATSSNTPHKSQDSQILSLT. Phosphoserine occurs at positions 286, 292, 298, and 301. Residues 288–307 form a disordered region; that stretch reads PATSSNTPHKSQDSQILSLT.

The protein belongs to the G-protein coupled receptor 1 family. Multiply phosphorylated in clusters of serines and threonines in the C-terminal tail. Phosphorylation of Ser-298 and Ser-301 is mediated by GRK5 and/or GRK6. In terms of tissue distribution, predominantly expressed in immune and gastrointestinal tissues. Strongly GPR35 expressed in colonic macrophages.

It localises to the cell membrane. Functionally, G-protein coupled receptor that binds to several ligands including the tryptophan metabolite kynurenic acid (KYNA), lysophosphatidic acid (LPA) or 5-hydroxyindoleacetic acid (5-HIAA) with high affinity, leading to rapid and transient activation of numerous intracellular signaling pathways. Plays a role in neutrophil recruitment to sites of inflammation and bacterial clearance through the major serotonin metabolite 5-HIAA that acts as a physiological ligand. Stimulates lipid metabolism, thermogenic, and anti-inflammatory gene expression in adipose tissue once activated by kynurenic acid. In macrophages, activation by lysophosphatidic acid promotes GPR35-induced signaling with a distinct transcriptional profile characterized by TNF production associated with ERK and NF-kappa-B activation. In turn, induces chemotaxis of macrophages. In Mus musculus (Mouse), this protein is G-protein coupled receptor 35 (Gpr35).